Reading from the N-terminus, the 424-residue chain is UDP-N-acetylglucosamine 1-carboxyvinyltransferase (424 aa).

22-23 (KN) provides a ligand contact to phosphoenolpyruvate. Position 98 (arginine 98) interacts with UDP-N-acetyl-alpha-D-glucosamine. Residue cysteine 122 is the Proton donor of the active site. Residue cysteine 122 is modified to 2-(S-cysteinyl)pyruvic acid O-phosphothioketal. Residues 127–131 (RPVDQ), aspartate 312, and isoleucine 334 each bind UDP-N-acetyl-alpha-D-glucosamine.

It belongs to the EPSP synthase family. MurA subfamily.

The protein resides in the cytoplasm. It carries out the reaction phosphoenolpyruvate + UDP-N-acetyl-alpha-D-glucosamine = UDP-N-acetyl-3-O-(1-carboxyvinyl)-alpha-D-glucosamine + phosphate. The protein operates within cell wall biogenesis; peptidoglycan biosynthesis. In terms of biological role, cell wall formation. Adds enolpyruvyl to UDP-N-acetylglucosamine. This Xanthomonas campestris pv. campestris (strain B100) protein is UDP-N-acetylglucosamine 1-carboxyvinyltransferase.